Consider the following 138-residue polypeptide: Mu-like prophage FluMu G protein 2 (138 aa).

This sequence to phage Mu protein G.

This chain is Mu-like prophage FluMu G protein 2, found in Haemophilus influenzae (strain ATCC 51907 / DSM 11121 / KW20 / Rd).